Reading from the N-terminus, the 231-residue chain is Putative N-acetylmannosamine-6-phosphate 2-epimerase (231 aa).

This sequence belongs to the NanE family.

It carries out the reaction an N-acyl-D-glucosamine 6-phosphate = an N-acyl-D-mannosamine 6-phosphate. Its pathway is amino-sugar metabolism; N-acetylneuraminate degradation; D-fructose 6-phosphate from N-acetylneuraminate: step 3/5. In terms of biological role, converts N-acetylmannosamine-6-phosphate (ManNAc-6-P) to N-acetylglucosamine-6-phosphate (GlcNAc-6-P). The chain is Putative N-acetylmannosamine-6-phosphate 2-epimerase from Listeria monocytogenes serotype 4b (strain CLIP80459).